The primary structure comprises 346 residues: Sensor histidine kinase GraS (346 aa).

A run of 2 helical transmembrane segments spans residues 15–35 (INWI…AYID) and 43–63 (VFYI…FTFV). One can recognise a Histidine kinase domain in the interval 126 to 332 (EFVHDIKTPV…TFYFIFPQQN (207 aa)). Histidine 129 is modified (phosphohistidine; by autocatalysis).

Autophosphorylated.

The protein resides in the cell membrane. It carries out the reaction ATP + protein L-histidine = ADP + protein N-phospho-L-histidine.. Member of the two-component regulatory system GraR/GraS involved in resistance against cationic antimicrobial peptides (CAMPs). GraS probably functions as a sensor protein kinase which is autophosphorylated at a histidine residue and transfers its phosphate group to GraR. The protein is Sensor histidine kinase GraS (graS) of Staphylococcus epidermidis (strain ATCC 35984 / DSM 28319 / BCRC 17069 / CCUG 31568 / BM 3577 / RP62A).